The sequence spans 195 residues: Myosin regulatory light chain, striated muscle, 25 kDa isoform (195 aa).

The segment covering 1–17 (AKDKEKKEKKDKKKDDA) has biased composition (basic and acidic residues). The interval 1-39 (AKDKEKKEKKDKKKDDAPAEEAPAAAAAPAEEAAPTPSA) is disordered. The segment covering 20–39 (EEAPAAAAAPAEEAAPTPSA) has biased composition (low complexity). EF-hand domains follow at residues 55–90 (NQIQ…IGRE) and 124–159 (DTEG…VGDQ). Ca(2+) is bound by residues Asp68, Asp70, Asp72, and Asp79.

In terms of assembly, myosin is a hexamer of 2 heavy chains and 4 light chains.

Its function is as follows. Plays an important role in regulation of muscle cell contractile activity. The protein is Myosin regulatory light chain, striated muscle, 25 kDa isoform of Lumbricus terrestris (Common earthworm).